The primary structure comprises 296 residues: MEKLKEFERDLQPRQHLWYFEYYTGNNVGLFMKINRMIYSGQSDIQRIDIFENPDLGVVFSLDGITMTTEKDEFMYHEMLAHVPMFLHPNPKKVLIIGGGDGGTLREVLKHDSVEKAVLCEVDGLVIEAARKYLKQTSCGFDDPRTEIVIANGAEYVRKFKNEFDVIIIDSTDPTAGQGGHLFTEEFYQACYDALKEDGVFSAETEDPFYDIGWFKLAYKRISKVFPITKVYLGFMTTYPSGMWSYTFASKGIDPIKDFNPEKVKNFNKELKYYNEEVHVASFALPNFVKKELGLM.

The PABS domain occupies H16–K251. Position 46 (Q46) interacts with S-methyl-5'-thioadenosine. Residues H77 and D101 each contribute to the spermidine site. S-methyl-5'-thioadenosine-binding positions include E121 and N152–G153. Catalysis depends on D170, which acts as the Proton acceptor. Residue D170–D173 participates in spermidine binding.

This sequence belongs to the spermidine/spermine synthase family. In terms of assembly, homodimer or homotetramer.

It localises to the cytoplasm. The enzyme catalyses S-adenosyl 3-(methylsulfanyl)propylamine + putrescine = S-methyl-5'-thioadenosine + spermidine + H(+). It participates in amine and polyamine biosynthesis; spermidine biosynthesis; spermidine from putrescine: step 1/1. Catalyzes the irreversible transfer of a propylamine group from the amino donor S-adenosylmethioninamine (decarboxy-AdoMet) to putrescine (1,4-diaminobutane) to yield spermidine. This Thermotoga petrophila (strain ATCC BAA-488 / DSM 13995 / JCM 10881 / RKU-1) protein is Polyamine aminopropyltransferase.